A 507-amino-acid polypeptide reads, in one-letter code: Extracellular elastase (507 aa).

Residues 1–28 form the signal peptide; the sequence is MKNFSKFALTSIAALTVASPLVNTEVDA. The propeptide occupies 29 to 207; the sequence is KDKVSATQNI…VVDKLNMIKE (179 aa). Position 347 (D347) interacts with Ca(2+). H351 is a Zn(2+) binding site. Residue E352 is part of the active site. 2 residues coordinate Zn(2+): H355 and E375. Ca(2+) contacts are provided by D386, E388, D389, L391, E394, Y397, T398, V401, and D404. The active-site Proton donor is the H435.

It belongs to the peptidase M4 family. The cofactor is Ca(2+). Zn(2+) is required as a cofactor.

The protein resides in the secreted. Protease that has a low substrate specificity. Glucagon is preferentially cleaved between aromatic (Phe) and hydrophobic (Val) amino acids. Hydrolyzes casein and elastin. The chain is Extracellular elastase (sepA) from Staphylococcus epidermidis.